We begin with the raw amino-acid sequence, 257 residues long: Zinc finger protein 8 (257 aa).

Disordered regions lie at residues 48 to 92 (GDNS…NNNN), 108 to 128 (QALG…KRGS), and 214 to 238 (GVYS…PNNW). The segment covering 50 to 65 (NSDNLSAEPSDHQTTT) has biased composition (polar residues). Residues 66-92 (KNDESSENIKDKDKEKDKDKDKDNNNN) are compositionally biased toward basic and acidic residues. The segment at 95–117 (FECHYCFRNFPTSQALGGHQNAH) adopts a C2H2-type zinc-finger fold. Residues 115-126 (NAHKRERQHAKR) are compositionally biased toward basic residues.

As to expression, expressed in developing cauline leaves.

It is found in the nucleus. Probable transcription factor required for the initiation of inflorescence trichomes in response to gibberellin and cytokinin. Is not involved in the regulation of trichome branching. Is functionally equivalent to GIS2. Acts as a negative regulator of abscisic acid (ABA) signaling during germination and early seedling development. The chain is Zinc finger protein 8 from Arabidopsis thaliana (Mouse-ear cress).